A 156-amino-acid polypeptide reads, in one-letter code: Ribosomal RNA large subunit methyltransferase H (156 aa).

Residues leucine 73, glycine 104, and 123–128 (LSALTL) each bind S-adenosyl-L-methionine.

Belongs to the RNA methyltransferase RlmH family. As to quaternary structure, homodimer.

The protein localises to the cytoplasm. The catalysed reaction is pseudouridine(1915) in 23S rRNA + S-adenosyl-L-methionine = N(3)-methylpseudouridine(1915) in 23S rRNA + S-adenosyl-L-homocysteine + H(+). Specifically methylates the pseudouridine at position 1915 (m3Psi1915) in 23S rRNA. The polypeptide is Ribosomal RNA large subunit methyltransferase H (Shewanella sp. (strain MR-7)).